The primary structure comprises 180 residues: Crossover junction endodeoxyribonuclease RuvC (180 aa).

Active-site residues include aspartate 7, glutamate 66, and aspartate 138. Mg(2+) contacts are provided by aspartate 7, glutamate 66, and aspartate 138.

It belongs to the RuvC family. In terms of assembly, homodimer which binds Holliday junction (HJ) DNA. The HJ becomes 2-fold symmetrical on binding to RuvC with unstacked arms; it has a different conformation from HJ DNA in complex with RuvA. In the full resolvosome a probable DNA-RuvA(4)-RuvB(12)-RuvC(2) complex forms which resolves the HJ. Mg(2+) is required as a cofactor.

Its subcellular location is the cytoplasm. It carries out the reaction Endonucleolytic cleavage at a junction such as a reciprocal single-stranded crossover between two homologous DNA duplexes (Holliday junction).. Functionally, the RuvA-RuvB-RuvC complex processes Holliday junction (HJ) DNA during genetic recombination and DNA repair. Endonuclease that resolves HJ intermediates. Cleaves cruciform DNA by making single-stranded nicks across the HJ at symmetrical positions within the homologous arms, yielding a 5'-phosphate and a 3'-hydroxyl group; requires a central core of homology in the junction. The consensus cleavage sequence is 5'-(A/T)TT(C/G)-3'. Cleavage occurs on the 3'-side of the TT dinucleotide at the point of strand exchange. HJ branch migration catalyzed by RuvA-RuvB allows RuvC to scan DNA until it finds its consensus sequence, where it cleaves and resolves the cruciform DNA. This is Crossover junction endodeoxyribonuclease RuvC from Burkholderia multivorans (strain ATCC 17616 / 249).